We begin with the raw amino-acid sequence, 117 residues long: MKFIFMYFIFIILISSILLLLNKFISIYKKKDYEKSSPFECGFNPITKANLPFSLPFFLMTMMFLIFDVEIILFLPIIFYLKSSSTMISYLMISIFLILLITTLILEWMNNYLNWLF.

3 helical membrane-spanning segments follow: residues 1–21 (MKFI…LLLL), 58–78 (FLMT…LPII), and 86–106 (TMIS…TLIL).

Belongs to the complex I subunit 3 family.

It localises to the mitochondrion membrane. It carries out the reaction a ubiquinone + NADH + 5 H(+)(in) = a ubiquinol + NAD(+) + 4 H(+)(out). In terms of biological role, core subunit of the mitochondrial membrane respiratory chain NADH dehydrogenase (Complex I) that is believed to belong to the minimal assembly required for catalysis. Complex I functions in the transfer of electrons from NADH to the respiratory chain. The immediate electron acceptor for the enzyme is believed to be ubiquinone. The protein is NADH-ubiquinone oxidoreductase chain 3 (ND3) of Apis mellifera ligustica (Common honeybee).